Here is a 121-residue protein sequence, read N- to C-terminus: Large ribosomal subunit protein uL18 (121 aa).

Belongs to the universal ribosomal protein uL18 family. Part of the 50S ribosomal subunit; part of the 5S rRNA/L5/L18/L25 subcomplex. Contacts the 5S and 23S rRNAs.

In terms of biological role, this is one of the proteins that bind and probably mediate the attachment of the 5S RNA into the large ribosomal subunit, where it forms part of the central protuberance. This Ureaplasma urealyticum serovar 10 (strain ATCC 33699 / Western) protein is Large ribosomal subunit protein uL18.